The sequence spans 145 residues: Large ribosomal subunit protein uL13 (145 aa).

The protein belongs to the universal ribosomal protein uL13 family. In terms of assembly, part of the 50S ribosomal subunit.

This protein is one of the early assembly proteins of the 50S ribosomal subunit, although it is not seen to bind rRNA by itself. It is important during the early stages of 50S assembly. This Bacillus cytotoxicus (strain DSM 22905 / CIP 110041 / 391-98 / NVH 391-98) protein is Large ribosomal subunit protein uL13.